We begin with the raw amino-acid sequence, 150 residues long: Troponin C, isoform 2A (150 aa).

Position 1 is an N-acetylmethionine (methionine 1). EF-hand domains follow at residues 7–42, 43–78, 83–118, and 119–150; these read EQIGALQKAFDSFDTDSKGFITPETVGVILRMMGVK, ISEKNLQEVIAETDEDGSGELEFEEFVELAAKFLIE, ALKTELREAFRVYDKEGNGYITTDVLKEILRELDNR, and LTEEDLDSIIEEVDEDGSGTLDFNEFMEMMNG. Ca(2+) is bound by residues aspartate 56, aspartate 58, serine 60, glutamate 62, and glutamate 67. Residues aspartate 132, aspartate 134, serine 136, threonine 138, and glutamate 143 each coordinate Ca(2+).

This sequence belongs to the troponin C family.

Its function is as follows. Troponin is the central regulatory protein of striated muscle contraction. Tn consists of three components: Tn-I which is the inhibitor of actomyosin ATPase, Tn-T which contains the binding site for tropomyosin and Tn-C. The binding of calcium to Tn-C abolishes the inhibitory action of Tn on actin filaments. This is Troponin C, isoform 2A from Homarus americanus (American lobster).